Reading from the N-terminus, the 79-residue chain is UPF0349 protein BCE_5075 (79 aa).

It belongs to the UPF0349 family.

The polypeptide is UPF0349 protein BCE_5075 (Bacillus cereus (strain ATCC 10987 / NRS 248)).